The sequence spans 152 residues: ASP external chaperone (152 aa).

An N-terminal signal peptide occupies residues 1-22 (MNKPVTLLLATLLAPLSGQLCA).

As to quaternary structure, forms a complex with the serine protease ASP in the periplasm. After translocation of the ASP-ORF2 complex from the periplasm to the extracellular space, the complex is dissociated in a pH-dependent manner.

It localises to the periplasm. The protein localises to the secreted. Degraded by ASP after secretion and dissociation of the ASP-ORF2 complex. Functionally, required for the production of the active form of the Aeromonas extracellular serine protease (ASP). Acts as a chaperone that helps ASP form an active structure in the periplasm. Formation of a complex with ASP in the periplasm also inactivates the protease activity and likely protects ASP from intrinsic proteases. Dissociation of the ASP-ORF2 complex after secretion in the extracellular space generates an active ASP. This is ASP external chaperone from Aeromonas sobria.